A 575-amino-acid polypeptide reads, in one-letter code: Transcription factor COE2 (575 aa).

The interval 62 to 65 (RKSN) is interaction with DNA. Residues 150 to 169 (CRVLLTHEVMCSRCCEKKSC) form a C5-type zinc finger. 2 interaction with DNA regions span residues 196–203 (NCLKTAGN) and 235–238 (NNSK). In terms of domain architecture, IPT/TIG spans 253–336 (PCIKAISPSE…KGAPGRFIYT (84 aa)). A compositionally biased stretch (polar residues) spans 441-453 (STQGNNQGYIRNT). The interval 441-479 (STQGNNQGYIRNTSSISPRGYSSSSTPQQSNYSTSSNSM) is disordered. The segment covering 454–479 (SSISPRGYSSSSTPQQSNYSTSSNSM) has biased composition (low complexity).

This sequence belongs to the COE family. In terms of assembly, forms either a homodimer or a heterodimer with a related family member. Interacts with SIX1.

It localises to the nucleus. Its function is as follows. Transcription factor that, in osteoblasts, activates the decoy receptor for RANKL, TNFRSF11B, which in turn regulates osteoclast differentiation. Acts in synergy with the Wnt-responsive LEF1/CTNNB1 pathway. Recognizes variations of the palindromic sequence 5'-ATTCCCNNGGGAATT-3'. The sequence is that of Transcription factor COE2 (EBF2) from Bos taurus (Bovine).